A 135-amino-acid polypeptide reads, in one-letter code: Interleukin-4 (135 aa).

An N-terminal signal peptide occupies residues 1–24 (MGLTSQLIPALVCLLVCTSHFVHG). 3 disulfide bridges follow: C27-C135, C48-C85, and C70-C105. 2 N-linked (GlcNAc...) asparagine glycosylation sites follow: N62 and N96.

The protein belongs to the IL-4/IL-13 family.

Its subcellular location is the secreted. Functionally, participates in at least several B-cell activation processes as well as of other cell types. It is a costimulator of DNA-synthesis. It induces the expression of class II MHC molecules on resting B-cells. It enhances both secretion and cell surface expression of IgE and IgG1. It also regulates the expression of the low affinity Fc receptor for IgE (CD23) on both lymphocytes and monocytes. Positively regulates IL31RA expression in macrophages. Stimulates autophagy in dendritic cells by interfering with mTORC1 signaling and through the induction of RUFY4. The polypeptide is Interleukin-4 (IL4) (Capra hircus (Goat)).